Here is a 708-residue protein sequence, read N- to C-terminus: Leukotoxin translocation ATP-binding protein LktB (708 aa).

A Peptidase C39 domain is found at 1 to 126; that stretch reads MEANHQRNDL…ACYQGQLILV (126 aa). The ABC transmembrane type-1 domain maps to 155 to 437; sequence FLETLIVSIF…LAQLWQDFQQ (283 aa). Helical transmembrane passes span 159–179, 192–212, 270–290, 296–316, and 389–409; these read LIVS…FQVV, LNII…LSGL, ALTS…MWYY, LVIL…SPIL, and VMVI…LSIG. Residues 469–704 form the ABC transporter domain; it reads IAFKNIRFRY…SNGLYSYLHQ (236 aa). 503 to 510 lines the ATP pocket; sequence GRSGSGKS.

Belongs to the ABC transporter superfamily. Protein-1 exporter (TC 3.A.1.109) family. Homodimer.

Its subcellular location is the cell inner membrane. It carries out the reaction ATP + H2O + proteinSide 1 = ADP + phosphate + proteinSide 2.. Its function is as follows. Part of the ABC transporter complex LktBD involved in leukotoxin export. Transmembrane domains (TMD) form a pore in the inner membrane and the ATP-binding domain (NBD) is responsible for energy generation. This is Leukotoxin translocation ATP-binding protein LktB (lktB) from Mannheimia glucosida.